The following is a 713-amino-acid chain: Forkhead box protein P2 (713 aa).

Positions 1–28 are enriched in polar residues; the sequence is MMQESATETISNSSMNQNGMSTLSSQLD. Disordered stretches follow at residues 1 to 45 and 279 to 337; these read MMQE…SEVS and DNGI…TGAS. Over residues 290 to 303 the composition is skewed to low complexity; the sequence is TTNNSSSTTSSTTS. Over residues 313 to 322 the composition is skewed to polar residues; the sequence is SIVNGQSSVL. A compositionally biased stretch (basic and acidic residues) spans 324-335; the sequence is ARRDSSSHEETG. The C2H2-type zinc finger occupies 344-369; sequence GVCKWPGCESICEDFGQFLKHLNNEH. Residues 386–407 form a leucine-zipper region; sequence VQQLEIQLSKERERLQAMMTHL. The CTBP1-binding stretch occupies residues 420–424; it reads PLNLV. The segment covering 436–457 has biased composition (low complexity); the sequence is TSPQSLPQTPTTPTAPVTPITQ. Residues 436 to 463 form a disordered region; the sequence is TSPQSLPQTPTTPTAPVTPITQGPSVIT. Positions 502 to 592 form a DNA-binding region, fork-head; that stretch reads RPPFTYATLI…SQKITGSPTL (91 aa). Disordered regions lie at residues 647–666 and 676–713; these read LDHIDSNGNSSPGCSPQPHI and VIAEDEDCPMSLVTTANHSPELEDDREIEEEPLSEDLE. The span at 697-713 shows a compositional bias: acidic residues; that stretch reads LEDDREIEEEPLSEDLE.

In terms of assembly, forms homodimers and heterodimers with FOXP1 and FOXP4. Dimerization is required for DNA-binding. Interacts with CTBP1. Interacts with FOXP1. Interacts with TBR1. Interacts with ZMYM2.

The protein localises to the nucleus. In terms of biological role, transcriptional repressor that may play a role in the specification and differentiation of lung epithelium. May also play a role in developing neural, gastrointestinal and cardiovascular tissues. Can act with CTBP1 to synergistically repress transcription but CTPBP1 is not essential. Plays a role in synapse formation by regulating SRPX2 levels. This chain is Forkhead box protein P2 (FOXP2), found in Hylobates lar (Lar gibbon).